Reading from the N-terminus, the 235-residue chain is Probable septum site-determining protein MinC (235 aa).

The interval 104–125 (KAVRPAPVEPATPSEPPQNANP) is disordered. The segment covering 110-119 (PVEPATPSEP) has biased composition (pro residues).

The protein belongs to the MinC family. Interacts with MinD and FtsZ.

Cell division inhibitor that blocks the formation of polar Z ring septums. Rapidly oscillates between the poles of the cell to destabilize FtsZ filaments that have formed before they mature into polar Z rings. Prevents FtsZ polymerization. The chain is Probable septum site-determining protein MinC from Salmonella enteritidis PT4 (strain P125109).